Consider the following 440-residue polypeptide: 2-alpha-hydroxytaxane 2-O-benzoyltransferase (440 aa).

Active-site proton acceptor residues include histidine 158 and aspartate 367.

Belongs to the plant acyltransferase family.

The catalysed reaction is 10-deacetyl-2-debenzoylbaccatin III + benzoyl-CoA = 10-deacetylbaccatin III + CoA. It functions in the pathway alkaloid biosynthesis; taxol biosynthesis; baccatin III from 10-deacetyl-2-debenzoylbaccatin III: step 1/2. Its function is as follows. Catalyzes the conversion of 2-debenzoyl-7,13-diacetylbaccatin III, a semisynthetic substrate, to 7,13-diacetylbaccatin III. In Taxus cuspidata (Japanese yew), this protein is 2-alpha-hydroxytaxane 2-O-benzoyltransferase.